Reading from the N-terminus, the 115-residue chain is Nucleoid-associated protein Rpic_1036 (115 aa).

Belongs to the YbaB/EbfC family. Homodimer.

It localises to the cytoplasm. The protein localises to the nucleoid. Its function is as follows. Binds to DNA and alters its conformation. May be involved in regulation of gene expression, nucleoid organization and DNA protection. The protein is Nucleoid-associated protein Rpic_1036 of Ralstonia pickettii (strain 12J).